The chain runs to 327 residues: Methionyl-tRNA formyltransferase (327 aa).

A (6S)-5,6,7,8-tetrahydrofolate-binding site is contributed by 111–114 (SLLP).

Belongs to the Fmt family.

It carries out the reaction L-methionyl-tRNA(fMet) + (6R)-10-formyltetrahydrofolate = N-formyl-L-methionyl-tRNA(fMet) + (6S)-5,6,7,8-tetrahydrofolate + H(+). Its function is as follows. Attaches a formyl group to the free amino group of methionyl-tRNA(fMet). The formyl group appears to play a dual role in the initiator identity of N-formylmethionyl-tRNA by promoting its recognition by IF2 and preventing the misappropriation of this tRNA by the elongation apparatus. This Synechococcus elongatus (strain ATCC 33912 / PCC 7942 / FACHB-805) (Anacystis nidulans R2) protein is Methionyl-tRNA formyltransferase.